A 221-amino-acid chain; its full sequence is MADLKTQILDAYNFRHATKEFDPNKKVSDSDFEFILETGRLSPSSLGLEPWKFVVVQNPEFREKLREYTWGAQKQLPTASHFVLILARTAKDIKYNADYIKRHLKEVKQMPQDVYEGYLSKTEEFQKNDLHLLESDRTLFDWASKQTYIALGNMMTAAAQIGVDSCPIEGFQYDHIHRILEEEGLLENGSFDISVMVAFGYRVRDPRPKTRSAVEDVVKWV.

FMN is bound by residues 15–17 and 73–75; these read RHA and QKQ. An NAD(+)-binding site is contributed by 157 to 162; sequence AAAQIG. FMN contacts are provided by residues 169–170 and arginine 211; that span reads EG.

Belongs to the nitroreductase family. As to quaternary structure, monomer. It depends on FMN as a cofactor.

In Bacillus subtilis (strain 168), this protein is Putative NAD(P)H nitroreductase YfkO (yfkO).